The primary structure comprises 257 residues: Exosome complex component Rrp4 (257 aa).

The S1 motif domain maps to 65–137 (GDNVLGKIVD…EVNQIDLTTK (73 aa)). In terms of domain architecture, KH spans 147-206 (RGGQLVTITPSKVPRLIGKGGSMINMIKTLTGTRIIVGQNGWVWVSGKNDELERLAIEAI).

The protein belongs to the RRP4 family. Component of the archaeal exosome complex. Forms a trimer of Rrp4 and/or Csl4 subunits. The trimer associates with a hexameric ring-like arrangement composed of 3 Rrp41-Rrp42 heterodimers.

The protein localises to the cytoplasm. Its function is as follows. Non-catalytic component of the exosome, which is a complex involved in RNA degradation. Increases the RNA binding and the efficiency of RNA degradation. Confers strong poly(A) specificity to the exosome. The polypeptide is Exosome complex component Rrp4 (Thermococcus kodakarensis (strain ATCC BAA-918 / JCM 12380 / KOD1) (Pyrococcus kodakaraensis (strain KOD1))).